The primary structure comprises 144 residues: Nucleoside diphosphate kinase (144 aa).

ATP-binding residues include lysine 11, phenylalanine 59, arginine 87, threonine 93, arginine 104, and asparagine 114. The active-site Pros-phosphohistidine intermediate is the histidine 117.

It belongs to the NDK family. Homotetramer. It depends on Mg(2+) as a cofactor.

It is found in the cytoplasm. The enzyme catalyses a 2'-deoxyribonucleoside 5'-diphosphate + ATP = a 2'-deoxyribonucleoside 5'-triphosphate + ADP. The catalysed reaction is a ribonucleoside 5'-diphosphate + ATP = a ribonucleoside 5'-triphosphate + ADP. Its function is as follows. Major role in the synthesis of nucleoside triphosphates other than ATP. The ATP gamma phosphate is transferred to the NDP beta phosphate via a ping-pong mechanism, using a phosphorylated active-site intermediate. The sequence is that of Nucleoside diphosphate kinase from Baumannia cicadellinicola subsp. Homalodisca coagulata.